A 37-amino-acid chain; its full sequence is Non-specific lipid-transfer protein P4 (37 aa).

It belongs to the plant LTP family.

The protein localises to the secreted. Plant non-specific lipid-transfer proteins transfer phospholipids as well as galactolipids across membranes. May play a role in wax or cutin deposition in the cell walls of expanding epidermal cells and certain secretory tissues. The polypeptide is Non-specific lipid-transfer protein P4 (Vitis sp. (Grape)).